A 384-amino-acid polypeptide reads, in one-letter code: MYQAKKMLLLGSGELGKEVVIEAQRLGVVTVAVDSYEHAPAMQAAHKSYVIDMLDKAQVREVIEKEKPDLIVPEVEAIATDELLKLEEEGFHVIPNARAAKLTMDREGIRRLAAETLHLPTAGYEFANTYEEFKEAAETIGFPCVVKPLMSSSGKGQSVCRSASGLKSCWDMAMEGGRVKNGRVIVEEFIPFESEITLLTVRAANGTSFCAPIGHEQKDGDYIESWQPHHMTEQQIKEAKHIAKSITDELGGYGLFGVELFLTEDKVYFSEVSPRPHDTGLVTLVTQNLSEFALHVRAVLGFPIPEITQLSPGASRPLKAPKELADYAVEGLEKALAVKSTQVRVFGKPVTKVGRRMAVALSAAETVEEARERAAEALSHLSIT.

N(1)-(5-phospho-beta-D-ribosyl)glycinamide contacts are provided by residues 14–15 (EL) and Glu74. ATP-binding positions include Arg106, Lys147, 152-157 (SSGKGQ), 187-190 (EEFI), and Glu195. Positions 111–300 (RLAAETLHLP…EFALHVRAVL (190 aa)) constitute an ATP-grasp domain. Mg(2+) contacts are provided by Glu259 and Glu271. Residues Asp278, Lys348, and 355–356 (RR) each bind N(1)-(5-phospho-beta-D-ribosyl)glycinamide.

This sequence belongs to the PurK/PurT family. As to quaternary structure, homodimer.

The catalysed reaction is N(1)-(5-phospho-beta-D-ribosyl)glycinamide + formate + ATP = N(2)-formyl-N(1)-(5-phospho-beta-D-ribosyl)glycinamide + ADP + phosphate + H(+). It functions in the pathway purine metabolism; IMP biosynthesis via de novo pathway; N(2)-formyl-N(1)-(5-phospho-D-ribosyl)glycinamide from N(1)-(5-phospho-D-ribosyl)glycinamide (formate route): step 1/1. Its function is as follows. Involved in the de novo purine biosynthesis. Catalyzes the transfer of formate to 5-phospho-ribosyl-glycinamide (GAR), producing 5-phospho-ribosyl-N-formylglycinamide (FGAR). Formate is provided by PurU via hydrolysis of 10-formyl-tetrahydrofolate. The chain is Formate-dependent phosphoribosylglycinamide formyltransferase from Bacillus velezensis (strain DSM 23117 / BGSC 10A6 / LMG 26770 / FZB42) (Bacillus amyloliquefaciens subsp. plantarum).